Consider the following 114-residue polypeptide: Large ribosomal subunit protein bL19 (114 aa).

Belongs to the bacterial ribosomal protein bL19 family.

This protein is located at the 30S-50S ribosomal subunit interface and may play a role in the structure and function of the aminoacyl-tRNA binding site. In Thermobifida fusca (strain YX), this protein is Large ribosomal subunit protein bL19.